A 238-amino-acid chain; its full sequence is Small ribosomal subunit protein uS2 (238 aa).

It belongs to the universal ribosomal protein uS2 family.

This Chloroflexus aurantiacus (strain ATCC 29366 / DSM 635 / J-10-fl) protein is Small ribosomal subunit protein uS2.